We begin with the raw amino-acid sequence, 207 residues long: Claudin-11 (207 aa).

Residue Met-1 is a topological domain, cytoplasmic. Residues 2 to 22 (VATCLQVVGFVTSFVGWIGVI) form a helical membrane-spanning segment. The Extracellular portion of the chain corresponds to 23-82 (VTTSTNDWVVTCGYTIPTCRKLDELGSKGLWADCVMATGLYHCKPLVDILILPGYVQACR). Residues 83-103 (ALMIAASVLGLPAILLLLTVL) form a helical membrane-spanning segment. Residues 104 to 122 (PCIRMGQEPGVAKYRRAQL) lie on the Cytoplasmic side of the membrane. A helical transmembrane segment spans residues 123–143 (AGVLLILLALCALVATIWFPV). At 144-157 (CAHRETTIVSFGYS) the chain is on the extracellular side. Residues 158-178 (LYAGWIGAVLCLVGGCVILCC) traverse the membrane as a helical segment. The Cytoplasmic segment spans residues 179–207 (AGDAQAFGENRFYYTAGSSSPTHAKSAHV). Phosphoserine is present on residues Ser-197 and Ser-198.

Belongs to the claudin family. As to quaternary structure, interacts with tetraspanin-3/TSPAN3. Interacts with OCLN.

It localises to the cell junction. The protein resides in the tight junction. The protein localises to the cell membrane. Functionally, plays a major role in tight junction-specific obliteration of the intercellular space, through calcium-independent cell-adhesion activity. This Homo sapiens (Human) protein is Claudin-11 (CLDN11).